A 173-amino-acid chain; its full sequence is Putative metal-dependent hydrolase BC_2708 (173 aa).

Zn(2+) is bound by residues His65, His156, and His160.

The protein belongs to the metal hydrolase YfiT family. As to quaternary structure, homodimer. Requires Zn(2+) as cofactor.

The protein resides in the cytoplasm. Functionally, possible metal-dependent hydrolase. The polypeptide is Putative metal-dependent hydrolase BC_2708 (Bacillus cereus (strain ATCC 14579 / DSM 31 / CCUG 7414 / JCM 2152 / NBRC 15305 / NCIMB 9373 / NCTC 2599 / NRRL B-3711)).